The chain runs to 321 residues: Coproporphyrin III ferrochelatase (321 aa).

Positions 185 and 267 each coordinate Fe(2+).

Belongs to the ferrochelatase family.

It localises to the cytoplasm. The enzyme catalyses Fe-coproporphyrin III + 2 H(+) = coproporphyrin III + Fe(2+). The protein operates within porphyrin-containing compound metabolism; protoheme biosynthesis. Its function is as follows. Involved in coproporphyrin-dependent heme b biosynthesis. Catalyzes the insertion of ferrous iron into coproporphyrin III to form Fe-coproporphyrin III. This is Coproporphyrin III ferrochelatase from Lacticaseibacillus paracasei (strain ATCC 334 / BCRC 17002 / CCUG 31169 / CIP 107868 / KCTC 3260 / NRRL B-441) (Lactobacillus paracasei).